Here is a 598-residue protein sequence, read N- to C-terminus: Transcription factor COE3 (598 aa).

The tract at residues 1–23 is disordered; that stretch reads MFGIQENIPRGGTTMKEEPLGGG. The interval 63 to 66 is interaction with DNA; sequence RKSN. The C5-type zinc-finger motif lies at 151 to 170; that stretch reads CRVLLTHEIMCSRCCDKKSC. Interaction with DNA stretches follow at residues 197–204 and 236–239; these read NCLKNAGN and NNSK. Residues 264-347 enclose the IPT/TIG domain; it reads PCIKAISPSE…KGAPGRFVYT (84 aa). The interval 452 to 483 is disordered; sequence TSQANDQVGYSRNTSSVSPRGYVPSSTPQQSN.

Belongs to the COE family. As to quaternary structure, forms either a homodimer or a heterodimer with a related family member.

The protein localises to the nucleus. Acts as a transcriptional activator. This chain is Transcription factor COE3 (coe3), found in Xenopus laevis (African clawed frog).